We begin with the raw amino-acid sequence, 216 residues long: Outer-membrane lipoprotein LolB (216 aa).

The first 24 residues, 1–24, serve as a signal peptide directing secretion; sequence MNNLNYFTKISASCAALALMTLAG. The N-palmitoyl cysteine moiety is linked to residue C25. Residue C25 is the site of S-diacylglycerol cysteine attachment.

This sequence belongs to the LolB family. In terms of assembly, monomer.

It localises to the cell outer membrane. Its function is as follows. Plays a critical role in the incorporation of lipoproteins in the outer membrane after they are released by the LolA protein. The polypeptide is Outer-membrane lipoprotein LolB (Shewanella loihica (strain ATCC BAA-1088 / PV-4)).